A 293-amino-acid chain; its full sequence is Urease accessory protein UreD (293 aa).

The protein belongs to the UreD family. UreD, UreF and UreG form a complex that acts as a GTP-hydrolysis-dependent molecular chaperone, activating the urease apoprotein by helping to assemble the nickel containing metallocenter of UreC. The UreE protein probably delivers the nickel.

It localises to the cytoplasm. Its function is as follows. Required for maturation of urease via the functional incorporation of the urease nickel metallocenter. The chain is Urease accessory protein UreD from Cupriavidus metallidurans (strain ATCC 43123 / DSM 2839 / NBRC 102507 / CH34) (Ralstonia metallidurans).